A 90-amino-acid polypeptide reads, in one-letter code: MEIAVEREEENYLELRIQGEDHTLGNLIAGRLRSVKGVILATYYLPHPLKDELVIKIKTDGTISPREALNRAIEDVKVLGESFLDELEQV.

The protein belongs to the archaeal Rpo11/eukaryotic RPB11/RPC19 RNA polymerase subunit family. In terms of assembly, part of the RNA polymerase complex.

The protein localises to the cytoplasm. The catalysed reaction is RNA(n) + a ribonucleoside 5'-triphosphate = RNA(n+1) + diphosphate. Its function is as follows. DNA-dependent RNA polymerase (RNAP) catalyzes the transcription of DNA into RNA using the four ribonucleoside triphosphates as substrates. The polypeptide is DNA-directed RNA polymerase subunit Rpo11 (Metallosphaera sedula (strain ATCC 51363 / DSM 5348 / JCM 9185 / NBRC 15509 / TH2)).